Reading from the N-terminus, the 454-residue chain is Pup--protein ligase (454 aa).

A Mg(2+)-binding site is contributed by glutamate 9. Arginine 53 contacts ATP. Residue tyrosine 55 participates in Mg(2+) binding. Aspartate 57 (proton acceptor) is an active-site residue. Residue glutamate 63 participates in Mg(2+) binding. ATP contacts are provided by threonine 66 and tryptophan 421.

Belongs to the Pup ligase/Pup deamidase family. Pup-conjugating enzyme subfamily.

It catalyses the reaction ATP + [prokaryotic ubiquitin-like protein]-L-glutamate + [protein]-L-lysine = ADP + phosphate + N(6)-([prokaryotic ubiquitin-like protein]-gamma-L-glutamyl)-[protein]-L-lysine.. Its pathway is protein degradation; proteasomal Pup-dependent pathway. The protein operates within protein modification; protein pupylation. In terms of biological role, catalyzes the covalent attachment of the prokaryotic ubiquitin-like protein modifier Pup to the proteasomal substrate proteins, thereby targeting them for proteasomal degradation. This tagging system is termed pupylation. The ligation reaction involves the side-chain carboxylate of the C-terminal glutamate of Pup and the side-chain amino group of a substrate lysine. The chain is Pup--protein ligase from Frankia casuarinae (strain DSM 45818 / CECT 9043 / HFP020203 / CcI3).